The primary structure comprises 192 residues: Thymidylate kinase (192 aa).

7 to 14 contributes to the ATP binding site; that stretch reads GIDCVGKS.

It belongs to the thymidylate kinase family.

It catalyses the reaction dTMP + ATP = dTDP + ADP. Functionally, phosphorylation of dTMP to form dTDP in both de novo and salvage pathways of dTTP synthesis. This chain is Thymidylate kinase (tmk), found in Campylobacter jejuni subsp. jejuni serotype O:2 (strain ATCC 700819 / NCTC 11168).